The following is a 332-amino-acid chain: uncharacterized protein (332 aa).

Positions Met1–Gly26 are cleaved as a signal peptide.

It localises to the endoplasmic reticulum. This is an uncharacterized protein from Schizosaccharomyces pombe (strain 972 / ATCC 24843) (Fission yeast).